A 383-amino-acid polypeptide reads, in one-letter code: Transcription factor Y1 (383 aa).

HTH myb-type domains follow at residues 9-61 and 62-116; these read KVGL…INYL and RADV…SRQI. DNA-binding regions (H-T-H motif) lie at residues 37 to 61 and 89 to 112; these read WRSLPKNAGLLRCGKSCRLRWINYL and WSLIASHFPGRTDNEIKNYWNSHL. The segment at 136–250 is disordered; that stretch reads SKLHSAEKRR…DATGPWELDP (115 aa). Composition is skewed to low complexity over residues 155-170 and 191-207; these read KSSSANTTTNTTSSKT and ASSPPTAATTTSAASSP.

The protein resides in the nucleus. It functions in the pathway pigment biosynthesis. Transcription factor involved in regulating the biosynthetic pathway of flavan-4-ol-derived red phlobaphene and red-brown 3-deoxyanthocyanidin (3-DA) pigments. Regulates transcription of chalcone synthase, chalcone isomerase, dihydroflavonol reductase and flavonoid 3'-hydroxylase genes required for the phlobaphene and 3-DA biosynthesis. Transcription of these genes is activated in mesocotyls in response to ingress of non-pathogenic fungus C.heterostrophus. Regulates the production of 3-DA phytoalexins (luteolinidin, 5-methoxyluteolinidin, apigeninidin and 7-methoxyapigeninidin) in mesocotyls in response to C.heterostrophus and corn leaf aphid (CLA) R.maidis. Involved in resistance against anthracnose leaf blight (ALB) caused by the pathogenic C.sublineolum fungus by inducing the production of 3-DA phytoalexins. Confers resistance, also by inducing the production of 3-DA phytoalexins, against CLA R.maidis, which is an insect and a pest. This is Transcription factor Y1 from Sorghum bicolor (Sorghum).